The sequence spans 359 residues: NF-kappa-B inhibitor beta (359 aa).

Residues serine 19 and serine 23 each carry the phosphoserine; by RPS6KA1 modification. ANK repeat units follow at residues 57-86, 93-122, and 126-155; these read DGDT…GTEY, LGQT…GVLV, and GGHT…SHPR. A disordered region spans residues 153 to 194; the sequence is HPRDASDTYLTQSQDCTPDTSHAPAAVDSQPNPENEEEPRDE. A compositionally biased stretch (polar residues) spans 160–172; sequence TYLTQSQDCTPDT. 3 ANK repeats span residues 206-235, 240-269, and 273-302; these read DGHT…DLNK, CGRT…DPTA, and GGRT…PEPE. The tract at residues 298 to 359 is disordered; the sequence is APEPEDEDDK…KPLPDDPNPA (62 aa). Serine 313 and serine 318 each carry phosphoserine. The span at 318–331 shows a compositional bias: acidic residues; that stretch reads SDSDNRDEGDEYDD. A compositionally biased stretch (pro residues) spans 344 to 359; the sequence is PPSPASKPLPDDPNPA.

It belongs to the NF-kappa-B inhibitor family. In terms of assembly, interacts with THRB (via ligand-binding domain). Interacts with RELA and REL. Interacts with COMMD1. Interacts with inhibitor kappa B-interacting Ras-like NKIRAS1 and NKIRAS2. Post-translationally, phosphorylated by RPS6KA1; followed by degradation. Interaction with NKIRAS1 and NKIRAS2 probably prevents phosphorylation. In terms of tissue distribution, highly expressed in testis followed by spleen.

The protein resides in the cytoplasm. The protein localises to the nucleus. Functionally, inhibits NF-kappa-B by complexing with and trapping it in the cytoplasm. However, the unphosphorylated form resynthesized after cell stimulation is able to bind NF-kappa-B allowing its transport to the nucleus and protecting it to further NFKBIA-dependent inactivation. Association with inhibitor kappa B-interacting NKIRAS1 and NKIRAS2 prevent its phosphorylation rendering it more resistant to degradation, explaining its slower degradation. This chain is NF-kappa-B inhibitor beta (Nfkbib), found in Mus musculus (Mouse).